A 246-amino-acid polypeptide reads, in one-letter code: Transmembrane protein 41 homolog (246 aa).

The next 6 membrane-spanning stretches (helical) occupy residues 12 to 32 (WLVL…YSNF), 68 to 88 (SVVL…AIPG), 101 to 123 (PFYV…CYTI), 159 to 179 (IFLR…SPVL), 182 to 202 (PLAP…FLYI), and 219 to 239 (SWSS…PILL).

It belongs to the TMEM41 family.

The protein localises to the membrane. This Caenorhabditis elegans protein is Transmembrane protein 41 homolog (tag-175).